Reading from the N-terminus, the 712-residue chain is Elongation factor G (712 aa).

Residues 8 to 290 (TRYRNIGISA…AVIEFLPSPT (283 aa)) form the tr-type G domain. Residues 17–24 (AHIDAGKT), 88–92 (DTPGH), and 142–145 (NKMD) each bind GTP.

It belongs to the TRAFAC class translation factor GTPase superfamily. Classic translation factor GTPase family. EF-G/EF-2 subfamily.

The protein resides in the cytoplasm. Catalyzes the GTP-dependent ribosomal translocation step during translation elongation. During this step, the ribosome changes from the pre-translocational (PRE) to the post-translocational (POST) state as the newly formed A-site-bound peptidyl-tRNA and P-site-bound deacylated tRNA move to the P and E sites, respectively. Catalyzes the coordinated movement of the two tRNA molecules, the mRNA and conformational changes in the ribosome. The protein is Elongation factor G of Acinetobacter baumannii (strain AB0057).